A 483-amino-acid chain; its full sequence is Argininosuccinate lyase (483 aa).

This sequence belongs to the lyase 1 family. Argininosuccinate lyase subfamily.

The protein resides in the cytoplasm. The enzyme catalyses 2-(N(omega)-L-arginino)succinate = fumarate + L-arginine. The protein operates within amino-acid biosynthesis; L-arginine biosynthesis; L-arginine from L-ornithine and carbamoyl phosphate: step 3/3. The protein is Argininosuccinate lyase of Albidiferax ferrireducens (strain ATCC BAA-621 / DSM 15236 / T118) (Rhodoferax ferrireducens).